Here is a 352-residue protein sequence, read N- to C-terminus: GTPase Obg (352 aa).

Residues 1–159 (MSFIDEAKVF…FPIFMQLKVL (159 aa)) enclose the Obg domain. Residues 160–327 (SDIGIIGMPN…VMLYEMLQKD (168 aa)) form the OBG-type G domain. GTP is bound by residues 166–173 (GMPNAGKS), 191–195 (FTTLE), 212–215 (DIPG), 279–282 (NKCD), and 308–310 (SLD). Residues S173 and T193 each coordinate Mg(2+).

It belongs to the TRAFAC class OBG-HflX-like GTPase superfamily. OBG GTPase family. In terms of assembly, monomer. The cofactor is Mg(2+).

The protein localises to the cytoplasm. An essential GTPase which binds GTP, GDP and possibly (p)ppGpp with moderate affinity, with high nucleotide exchange rates and a fairly low GTP hydrolysis rate. Plays a role in control of the cell cycle, stress response, ribosome biogenesis and in those bacteria that undergo differentiation, in morphogenesis control. The sequence is that of GTPase Obg from Anaplasma phagocytophilum (strain HZ).